The chain runs to 115 residues: Probable mycobacterial cidal antitoxin Rv3188 (115 aa).

Belongs to the MbcA/ParS/Xre antitoxin family. In terms of assembly, forms a heterotetramer with cognate toxin Rv3189.

Its function is as follows. Probable antitoxin component of a type II toxin-antitoxin (TA) system. Neutralizes the activity of cognate toxin Rv3189 by blocking access to the toxin active site. The polypeptide is Probable mycobacterial cidal antitoxin Rv3188 (Mycobacterium tuberculosis (strain ATCC 25618 / H37Rv)).